Reading from the N-terminus, the 274-residue chain is 4-hydroxy-3-methylbut-2-enyl diphosphate reductase (274 aa).

Residue Cys12 coordinates [4Fe-4S] cluster. (2E)-4-hydroxy-3-methylbut-2-enyl diphosphate-binding residues include His36 and His70. Dimethylallyl diphosphate is bound by residues His36 and His70. Residues His36 and His70 each contribute to the isopentenyl diphosphate site. Cys92 is a [4Fe-4S] cluster binding site. His120 is a (2E)-4-hydroxy-3-methylbut-2-enyl diphosphate binding site. His120 provides a ligand contact to dimethylallyl diphosphate. His120 contacts isopentenyl diphosphate. Glu122 serves as the catalytic Proton donor. Thr158 contributes to the (2E)-4-hydroxy-3-methylbut-2-enyl diphosphate binding site. Cys186 serves as a coordination point for [4Fe-4S] cluster. (2E)-4-hydroxy-3-methylbut-2-enyl diphosphate contacts are provided by Ser214, Ser215, Asn216, and Ser258. Residues Ser214, Ser215, Asn216, and Ser258 each coordinate dimethylallyl diphosphate. Isopentenyl diphosphate contacts are provided by Ser214, Ser215, Asn216, and Ser258.

Belongs to the IspH family. Requires [4Fe-4S] cluster as cofactor.

The enzyme catalyses isopentenyl diphosphate + 2 oxidized [2Fe-2S]-[ferredoxin] + H2O = (2E)-4-hydroxy-3-methylbut-2-enyl diphosphate + 2 reduced [2Fe-2S]-[ferredoxin] + 2 H(+). The catalysed reaction is dimethylallyl diphosphate + 2 oxidized [2Fe-2S]-[ferredoxin] + H2O = (2E)-4-hydroxy-3-methylbut-2-enyl diphosphate + 2 reduced [2Fe-2S]-[ferredoxin] + 2 H(+). The protein operates within isoprenoid biosynthesis; dimethylallyl diphosphate biosynthesis; dimethylallyl diphosphate from (2E)-4-hydroxy-3-methylbutenyl diphosphate: step 1/1. Its pathway is isoprenoid biosynthesis; isopentenyl diphosphate biosynthesis via DXP pathway; isopentenyl diphosphate from 1-deoxy-D-xylulose 5-phosphate: step 6/6. Catalyzes the conversion of 1-hydroxy-2-methyl-2-(E)-butenyl 4-diphosphate (HMBPP) into a mixture of isopentenyl diphosphate (IPP) and dimethylallyl diphosphate (DMAPP). Acts in the terminal step of the DOXP/MEP pathway for isoprenoid precursor biosynthesis. The chain is 4-hydroxy-3-methylbut-2-enyl diphosphate reductase from Campylobacter curvus (strain 525.92).